Here is a 123-residue protein sequence, read N- to C-terminus: KQFTKCELSQNLYDIDGYGRIALPELICTMFHTSGYDTQAIVENNESTEYGLFQISNALWCKSSQSPQSRNICDITCDKFLDDDITDDIMCAKKILDIKGIDYWIAHKALCTEKLEQWLCEKE.

In terms of domain architecture, C-type lysozyme spans 1-123 (KQFTKCELSQ…KLEQWLCEKE (123 aa)). Cystine bridges form between Cys-6–Cys-120, Cys-28–Cys-111, Cys-61–Cys-77, and Cys-73–Cys-91. An N-linked (GlcNAc...) asparagine glycan is attached at Asn-45. Ca(2+) contacts are provided by Lys-79, Asp-82, Asp-84, Asp-87, and Asp-88.

Belongs to the glycosyl hydrolase 22 family. As to quaternary structure, lactose synthase (LS) is a heterodimer of a catalytic component, beta1,4-galactosyltransferase (beta4Gal-T1) and a regulatory component, alpha-lactalbumin (LA). As to expression, mammary gland specific. Secreted in milk.

The protein resides in the secreted. Functionally, regulatory subunit of lactose synthase, changes the substrate specificity of galactosyltransferase in the mammary gland making glucose a good acceptor substrate for this enzyme. This enables LS to synthesize lactose, the major carbohydrate component of milk. In other tissues, galactosyltransferase transfers galactose onto the N-acetylglucosamine of the oligosaccharide chains in glycoproteins. The protein is Alpha-lactalbumin (LALBA) of Papio cynocephalus (Yellow baboon).